A 374-amino-acid polypeptide reads, in one-letter code: Pectate lyase 2 (374 aa).

The N-terminal stretch at M1–A22 is a signal peptide. An intrachain disulfide couples C93 to C176. The Ca(2+) site is built by D150, D152, E187, and D191. Residue R239 is part of the active site. C350 and C373 are joined by a disulfide.

Belongs to the polysaccharide lyase 1 family. PLADES subfamily. Ca(2+) is required as a cofactor.

The protein resides in the secreted. The enzyme catalyses Eliminative cleavage of (1-&gt;4)-alpha-D-galacturonan to give oligosaccharides with 4-deoxy-alpha-D-galact-4-enuronosyl groups at their non-reducing ends.. It functions in the pathway glycan metabolism; pectin degradation; 2-dehydro-3-deoxy-D-gluconate from pectin: step 2/5. Its function is as follows. Involved in maceration and soft-rotting of plant tissue. The polypeptide is Pectate lyase 2 (pel2) (Pectobacterium carotovorum (Erwinia carotovora)).